Reading from the N-terminus, the 518-residue chain is GMP synthase [glutamine-hydrolyzing] (518 aa).

Positions 11-203 (KIIVLDFGSQ…AFDVCQARSN (193 aa)) constitute a Glutamine amidotransferase type-1 domain. Cys88 functions as the Nucleophile in the catalytic mechanism. Residues His177 and Glu179 contribute to the active site. Residues 204 to 393 (WSMDDFIDMQ…LGMPHELVWR (190 aa)) form the GMPS ATP-PPase domain. 231–237 (SGGVDSS) is a binding site for ATP.

As to quaternary structure, homodimer.

It catalyses the reaction XMP + L-glutamine + ATP + H2O = GMP + L-glutamate + AMP + diphosphate + 2 H(+). It participates in purine metabolism; GMP biosynthesis; GMP from XMP (L-Gln route): step 1/1. Functionally, catalyzes the synthesis of GMP from XMP. The chain is GMP synthase [glutamine-hydrolyzing] from Ligilactobacillus salivarius (strain UCC118) (Lactobacillus salivarius).